The chain runs to 72 residues: Delta-actitoxin-Avd2b 3 (72 aa).

The signal sequence occupies residues 1-21 (MMSRLLVFLMLGAAFMLVVSA). Positions 22–42 (NDAYGDEPAFKDLNQGDESLG) are excised as a propeptide. 3 disulfides stabilise this stretch: Cys47/Cys62, Cys48/Cys56, and Cys50/Cys67.

The protein belongs to the sea anemone short toxin (type III) family.

It is found in the secreted. The protein localises to the nematocyst. Its function is as follows. Voltage-gated sodium channel (Nav) inhibitor. 1 uM completely inhibits insect voltage-gated sodium channel inactivation (DmNav1 from D.melanogaster). The chain is Delta-actitoxin-Avd2b 3 from Anemonia viridis (Snakelocks anemone).